The sequence spans 1249 residues: Cilia- and flagella-associated protein 57 (1249 aa).

8 WD repeats span residues 105–148 (FQVQ…AIIK), 195–233 (GESS…WETS), 335–374 (SDKQ…ISKG), 386–425 (LHSA…LELY), 427–469 (EYQE…KEYS), 471–506 (RGCK…NINI), 509–548 (GHTG…RETE), and 635–674 (AHAG…GRGI). Coiled-coil stretches lie at residues 690–1056 (KTDM…KTDL) and 1094–1165 (SDLQ…SALK).

It belongs to the CFAP57 family. As to quaternary structure, may form homodimers. Associates with components of the nexin-dynein regulatory complex (N-DRC) and the CFAP184:CFAP263 complex. In terms of tissue distribution, predominanly expressed in testis, lung and skin. Weak expression in brain and kidney.

It is found in the cytoplasm. Its subcellular location is the cytoskeleton. It localises to the cilium axoneme. Its function is as follows. Associates with components of the nexin-dynein regulatory complex (N-DRC), a key regulator of ciliary/flagellar motility, and might act as an inner dynein arm (IDA) hub or linkage. The polypeptide is Cilia- and flagella-associated protein 57 (Mus musculus (Mouse)).